A 273-amino-acid polypeptide reads, in one-letter code: Undecaprenyl-diphosphatase (273 aa).

7 helical membrane-spanning segments follow: residues 48 to 68, 89 to 109, 116 to 136, 152 to 172, 193 to 213, 222 to 242, and 252 to 272; these read AANT…VVVF, LTLL…VLFE, LFST…MIVA, ITYK…WPGF, ADFT…LSLL, ADIP…LLAI, and IRLV…YFLY.

It belongs to the UppP family.

The protein localises to the cell membrane. The catalysed reaction is di-trans,octa-cis-undecaprenyl diphosphate + H2O = di-trans,octa-cis-undecaprenyl phosphate + phosphate + H(+). Functionally, catalyzes the dephosphorylation of undecaprenyl diphosphate (UPP). Confers resistance to bacitracin. The protein is Undecaprenyl-diphosphatase of Geobacillus thermodenitrificans (strain NG80-2).